A 459-amino-acid polypeptide reads, in one-letter code: 23S rRNA (uracil-C(5))-methyltransferase RlmCD (459 aa).

The TRAM domain occupies 6 to 64; it reads PVEKNEYYDVTFEDLTHEGAGVAKVQGFPIFVPNALPEEKAQIKVTRVKKGFAFGRLIE. Positions 77, 83, 86, and 166 each coordinate [4Fe-4S] cluster. The S-adenosyl-L-methionine site is built by Gln290, Tyr319, Glu340, and Asp388. Cys415 (nucleophile) is an active-site residue.

Belongs to the class I-like SAM-binding methyltransferase superfamily. RNA M5U methyltransferase family.

The enzyme catalyses uridine(747) in 23S rRNA + S-adenosyl-L-methionine = 5-methyluridine(747) in 23S rRNA + S-adenosyl-L-homocysteine + H(+). It carries out the reaction uridine(1939) in 23S rRNA + S-adenosyl-L-methionine = 5-methyluridine(1939) in 23S rRNA + S-adenosyl-L-homocysteine + H(+). Catalyzes the formation of 5-methyl-uridine at positions 747 (m5U747) and 1939 (m5U1939) in 23S rRNA. The sequence is that of 23S rRNA (uracil-C(5))-methyltransferase RlmCD (rlmCD) from Bacillus subtilis (strain 168).